Consider the following 317-residue polypeptide: Tyrosine--tRNA ligase (317 aa).

Tyr32 contacts L-tyrosine. The 'HIGH' region motif lies at 37–45; the sequence is PSGEIHLGH. Residues Tyr152, Gln156, Asp159, and Gln174 each contribute to the L-tyrosine site. A 'KMSKS' region motif is present at residues 208-212; it reads KMSSS. Ser211 contacts ATP.

This sequence belongs to the class-I aminoacyl-tRNA synthetase family. TyrS type 3 subfamily. Homodimer.

Its subcellular location is the cytoplasm. It carries out the reaction tRNA(Tyr) + L-tyrosine + ATP = L-tyrosyl-tRNA(Tyr) + AMP + diphosphate + H(+). Functionally, catalyzes the attachment of tyrosine to tRNA(Tyr) in a two-step reaction: tyrosine is first activated by ATP to form Tyr-AMP and then transferred to the acceptor end of tRNA(Tyr). This is Tyrosine--tRNA ligase from Methanocorpusculum labreanum (strain ATCC 43576 / DSM 4855 / Z).